Here is a 1197-residue protein sequence, read N- to C-terminus: Neural cell adhesion molecule L1.1 (1197 aa).

Ig-like C2-type domains follow at residues 1–58, 69–160, 165–263, 268–355, and 360–442; these read EFRQ…TAVS, PSLA…EPMS, PSNS…YTVT, PYWT…THVH, and PAQI…KSIS. Topologically, residues 1–1054 are extracellular; that stretch reads EFRQRDPSPS…SPRNFATEGW (1054 aa). An intrachain disulfide couples Cys-92 to Cys-143. Residues Asn-135, Asn-149, Asn-221, Asn-298, Asn-414, Asn-421, Asn-438, and Asn-449 are each glycosylated (N-linked (GlcNAc...) asparagine). 3 disulfide bridges follow: Cys-199/Cys-247, Cys-289/Cys-339, and Cys-383/Cys-432. The region spanning 451–541 is the Ig-like C2-type 6 domain; that stretch reads TKIVGPPQNL…DSDTASGYIT (91 aa). Cys-472 and Cys-525 form a disulfide bridge. 5 consecutive Fibronectin type-III domains span residues 548-643, 645-742, 747-852, 853-952, and 953-1048; these read PPQS…TPAA, PDTN…SGED, APSA…TPEG, APGP…LLDG, and EPPS…SPRN. The span at 630 to 640 shows a compositional bias: polar residues; it reads APTESSLSYST. The interval 630-655 is disordered; that stretch reads APTESSLSYSTPAAKPDTNPENVMTL. The N-linked (GlcNAc...) asparagine glycan is linked to Asn-708. Residues Asn-959, Asn-968, Asn-1002, and Asn-1027 are each glycosylated (N-linked (GlcNAc...) asparagine). A helical transmembrane segment spans residues 1055 to 1075; sequence FIGLISALVLLLLVLLLLCYI. The Cytoplasmic portion of the chain corresponds to 1076 to 1197; it reads KKSKGGKYSV…TSVTGILGPN (122 aa). 2 disordered regions span residues 1115-1135 and 1154-1197; these read MEKC…SNDS and IGQY…LGPN.

This sequence belongs to the immunoglobulin superfamily. L1/neurofascin/NgCAM family. In terms of tissue distribution, expressed in postmitotic neurons in 16-36 hours embryos, including those in the brain, cranial ganglia and otic and olfactory placodes, and in all classes of spinal neurons.

Its subcellular location is the cell membrane. It localises to the cell projection. It is found in the growth cone. Functionally, cell adhesion molecule with an important role in the development of the nervous system. Involved in neuron-neuron adhesion, neurite fasciculation, outgrowth of neurites, etc. Binds to axonin on neurons. The sequence is that of Neural cell adhesion molecule L1.1 (nadl1.1) from Danio rerio (Zebrafish).